We begin with the raw amino-acid sequence, 590 residues long: Potassium-transporting ATPase potassium-binding subunit (590 aa).

12 helical membrane-spanning segments follow: residues Ala-3 to Gly-23, His-63 to Gln-83, Gly-134 to Ile-154, Val-177 to Ile-197, Phe-284 to Met-304, Trp-312 to Ala-332, Phe-359 to Val-379, Ala-388 to Val-408, Gly-411 to Gly-431, Ile-451 to Thr-471, Leu-515 to Met-535, and Leu-558 to Ala-578.

The protein belongs to the KdpA family. The system is composed of three essential subunits: KdpA, KdpB and KdpC.

Its subcellular location is the cell inner membrane. Its function is as follows. Part of the high-affinity ATP-driven potassium transport (or Kdp) system, which catalyzes the hydrolysis of ATP coupled with the electrogenic transport of potassium into the cytoplasm. This subunit binds the periplasmic potassium ions and delivers the ions to the membrane domain of KdpB through an intramembrane tunnel. In Ralstonia pickettii (strain 12J), this protein is Potassium-transporting ATPase potassium-binding subunit.